The primary structure comprises 254 residues: DNA repair protein RecO (254 aa).

Belongs to the RecO family.

Its function is as follows. Involved in DNA repair and RecF pathway recombination. The chain is DNA repair protein RecO from Rhodopseudomonas palustris (strain BisB18).